The chain runs to 298 residues: Max-like protein X (298 aa).

The interval 1–63 (MTEPGASPED…ARGCREDSSH (63 aa)) is disordered. S7 is subject to Phosphoserine. A compositionally biased stretch (basic residues) spans 28 to 37 (GRARARRGSG). 5 positions are modified to phosphoserine: S45, S48, S74, S77, and S98. The span at 98–109 (SIGSTSASSVPN) shows a compositional bias: polar residues. Positions 98-119 (SIGSTSASSVPNTDDEDSDYQQ) are disordered. The region spanning 129 to 187 (RRRRAHTQAEQKRRDAIKRGYDDLQTIVPTCQQQDFSIGSQKLSKAIVLQKTIDYIQFL) is the bHLH domain. The tract at residues 194 to 214 (QEEEVSTLRKDVTALKIMKVN) is leucine-zipper.

As to quaternary structure, efficient DNA binding requires dimerization with another bHLH protein. Binds DNA as a heterodimer with MAD1, MAD4, MNT, WBSCR14 and MLXIP. Can also bind DNA as a homodimer. In terms of tissue distribution, expressed in all tissues examined: stomach, duodenum, jejunum, ileum, colon, liver, pancreas, salivary gland, kidney, spleen, lung, heart, skeletal muscle, brain, ovary and testis.

Its subcellular location is the cytoplasm. The protein resides in the nucleus. Transcription regulator. Forms a sequence-specific DNA-binding protein complex with MAD1, MAD4, MNT, WBSCR14 and MLXIP which recognizes the core sequence 5'-CACGTG-3'. The TCFL4-MAD1, TCFL4-MAD4, TCFL4-WBSCR14 complexes are transcriptional repressors. Plays a role in transcriptional activation of glycolytic target genes. Involved in glucose-responsive gene regulation. The sequence is that of Max-like protein X (Mlx) from Mus musculus (Mouse).